Reading from the N-terminus, the 831-residue chain is Zinc transporter ZIP10 (831 aa).

A signal peptide spans 1–25 (MKVHMHTKFCLICLLTFIFHHCNHC). Residues 126–318 (HNHQHSHNHL…RKREAPHVKN (193 aa)) are disordered. A compositionally biased stretch (polar residues) spans 138–147 (ENQTVTSVST). A glycan (N-linked (GlcNAc...) asparagine) is linked at asparagine 139. Over residues 152 to 171 (KCDPEKETVEVSVKSDDKHM) the composition is skewed to basic and acidic residues. The segment covering 172 to 188 (HDHNHRLRHHHRLHHHL) has biased composition (basic residues). Residues 189–198 (DHNNTHHFHN) show a composition bias toward basic and acidic residues. Asparagine 198 and asparagine 218 each carry an N-linked (GlcNAc...) asparagine glycan. Over residues 211-221 (NEPSTETNKTQ) the composition is skewed to polar residues. The span at 229 to 238 (PKGKRKKKGR) shows a compositional bias: basic residues. Composition is skewed to basic and acidic residues over residues 256-273 (DQGE…DRVH) and 281-315 (HLPE…EAPH). Residue asparagine 339 is glycosylated (N-linked (GlcNAc...) asparagine). A run of 2 helical transmembrane segments spans residues 411–431 (IISI…VPII) and 438–458 (FLLT…ALLH). The segment at 464 to 484 (QGGHDHSHQHAHGHGHSHGHE) is disordered. A helical membrane pass occupies residues 495 to 515 (VLKGLVALGGIYLLFIIEHCI). 2 positions are modified to phosphothreonine: threonine 536 and threonine 553. At serine 591 the chain carries Phosphoserine. The next 4 helical transmembrane spans lie at 687–707 (AIGA…IAVF), 732–752 (IVYN…GTAV), 759–779 (ITLW…LVDM), and 801–821 (FILQ…IALY).

It belongs to the ZIP transporter (TC 2.A.5) family. As to quaternary structure, interacts with SLC39A6; which triggers cells to undergo EMT and mitosis. Found in a complex with SLC39A6, SLC39A10 and with the 'Ser-727' phosphorylated form of STAT3 throughout mitosis. Found in a complex with SLC39A6, SLC39A10 and with NCAM1; this complex controls NCAM1 phosphorylation and integration into focal adhesion complexes during epithelial-tomesenchymal transition. Found in a complex with SLC39A6, SLC39A10 and with GSK3B that controls NCAM1 phosphorylation. In terms of processing, undergoes N-terminal ectodomain shedding.

Its subcellular location is the cell membrane. The protein localises to the apical cell membrane. The catalysed reaction is Zn(2+)(in) = Zn(2+)(out). In terms of biological role, zinc-influx transporter. When associated with SLC39A6, the heterodimer formed by SLC39A10 and SLC39A6 mediates cellular zinc uptake to trigger cells to undergo epithelial-to-mesenchymal transition (EMT). SLC39A10-SLC39A6 heterodimers play also an essentiel role in initiating mitosis by importing zinc into cells to initiate a pathway resulting in the onset of mitosis. Plays an important for both mature B-cell maintenance and humoral immune responses. When associated with SLC39A10, the heterodimer controls NCAM1 phosphorylation and integration into focal adhesion complexes during EMT. In Homo sapiens (Human), this protein is Zinc transporter ZIP10.